Consider the following 866-residue polypeptide: Primer-independent DNA polymerase PolB (866 aa).

Residues 50 to 286 (SDLTLHIGFD…DRVPATIGAM (237 aa)) are exonuclease domain. The interval 287 to 385 (AVSRFTKTLK…GLLDILTPDY (99 aa)) is palm1 domain. The interval 386 to 481 (GNIRLSKNPD…NSESTSVFLP (96 aa)) is TPR1 domain. The tract at residues 482 to 522 (FVQQVRENRNRHIKGSLEEKFWKEIGNSLYGKLAQGLRAKT) is fingers domain. Residues 523–549 (AFDTARGLNRSLPPSSVTQPFFAAHVT) are TPR2 domain. Residues 550–678 (GFIRAVVGEL…PGQTLSRSTL (129 aa)) are palm2 domain. Residues 679–866 (ISTREMWLSE…RKYPTFCLPV (188 aa)) form a thumb domain region.

Mn(2+) is required as a cofactor.

The enzyme catalyses DNA(n) + a 2'-deoxyribonucleoside 5'-triphosphate = DNA(n+1) + diphosphate. Its function is as follows. DNA polymerase with primer-independent templated DNA polymerization activity, primer-dependent DNA polymerization activity with strand displacement, translesion synthesis activity across non-bulky base damage, 3'-5' exodeoxyribonuclease activity, and de novo primer synthesis activity. The enzyme is processive and faithful. Translation synthesis across abasic sites is coupled to de novo primer synthesis. Overexpression of wild-type protein increases survival of cells upon mitomycin C or UV treatment. The sequence is that of Primer-independent DNA polymerase PolB (pi-polB) from Escherichia coli.